Consider the following 146-residue polypeptide: UPF0178 protein BC_3040 (146 aa).

This sequence belongs to the UPF0178 family.

The chain is UPF0178 protein BC_3040 from Bacillus cereus (strain ATCC 14579 / DSM 31 / CCUG 7414 / JCM 2152 / NBRC 15305 / NCIMB 9373 / NCTC 2599 / NRRL B-3711).